We begin with the raw amino-acid sequence, 626 residues long: Two-component response regulator ORR24 (626 aa).

Residues 1–22 are disordered; sequence MTVEERQGRVGGHGVSGGGGGR. The span at 9–22 shows a compositional bias: gly residues; it reads RVGGHGVSGGGGGR. The Response regulatory domain occupies 30 to 145; sequence RVLAVDDDPT…QLRTIWQHVI (116 aa). Asp-81 carries the post-translational modification 4-aspartylphosphate. The span at 151–162 shows a compositional bias: basic and acidic residues; it reads DAKNRGNDDDAG. 2 disordered regions span residues 151–215 and 402–440; these read DAKN…KKPR and PLES…RTTN. The span at 191 to 202 shows a compositional bias: acidic residues; the sequence is NGDDGDDSDENS. The segment at residues 210-269 is a DNA-binding region (myb-like GARP); the sequence is TQKKPRVVWSVELHRKFVAAVNQLGIEKAVPKKILDLMNVENITRENVASHLQKYRLYLK. Over residues 402–421 the composition is skewed to polar residues; it reads PLESSNQQHLSRVHSSSADP.

It belongs to the ARR family. Type-B subfamily. In terms of processing, two-component system major event consists of a His-to-Asp phosphorelay between a sensor histidine kinase (HK) and a response regulator (RR). In plants, the His-to-Asp phosphorelay involves an additional intermediate named Histidine-containing phosphotransfer protein (HPt). This multistep phosphorelay consists of a His-Asp-His-Asp sequential transfer of a phosphate group between first a His and an Asp of the HK protein, followed by the transfer to a conserved His of the HPt protein and finally the transfer to an Asp in the receiver domain of the RR protein.

It localises to the nucleus. In terms of biological role, transcriptional activator that binds specific DNA sequence. Functions as a response regulator involved in His-to-Asp phosphorelay signal transduction system. Phosphorylation of the Asp residue in the receiver domain activates the ability of the protein to promote the transcription of target genes. May directly activate some type-A response regulators in response to cytokinins. The sequence is that of Two-component response regulator ORR24 from Oryza sativa subsp. japonica (Rice).